A 291-amino-acid chain; its full sequence is Protease HtpX homolog (291 aa).

2 helical membrane passes run 4-24 (VFLF…SARL) and 38-58 (LGML…ISLL). Zn(2+) is bound at residue His-144. Residue Glu-145 is part of the active site. His-148 contributes to the Zn(2+) binding site. 2 helical membrane-spanning segments follow: residues 159-179 (LIQG…AYAL) and 199-219 (ISSI…VMYF). Glu-224 contacts Zn(2+).

This sequence belongs to the peptidase M48B family. The cofactor is Zn(2+).

It localises to the cell inner membrane. The sequence is that of Protease HtpX homolog from Chlorobium luteolum (strain DSM 273 / BCRC 81028 / 2530) (Pelodictyon luteolum).